The primary structure comprises 717 residues: Mitotic spindle assembly checkpoint protein MAD1 (717 aa).

Met-1 carries the N-acetylmethionine modification. Ser-16 carries the phosphoserine modification. A coiled-coil region spans residues 46–631; the sequence is EQSMQLEERA…QTKIQEFRKV (586 aa). Position 61 is an N6-acetyllysine; alternate (Lys-61). Residue Lys-61 forms a Glycyl lysine isopeptide (Lys-Gly) (interchain with G-Cter in SUMO2); alternate linkage. Positions 79-82 match the Nuclear localization signal motif; sequence KRAR. 2 positions are modified to phosphoserine: Ser-214 and Ser-428. The interval 380–532 is necessary for interaction with NEK2; the sequence is LLEERKKREI…EMQMERLTLQ (153 aa). Positions 540–551 are necessary for interaction with MAD2L1; the sequence is TKVLHMSLNPAS.

The protein belongs to the MAD1 family. In terms of assembly, homodimer. Dimerizes via its N- and C- terminal regions. Heterodimerizes with MAD2L1 in order to form a tetrameric MAD1L1-MAD2L1 core complex. Interacts with the closed conformation form of MAD2L1 (C-MAD2) and open conformation form of MAD2L1 (O-MAD2). It is unclear whether MAD1L1 dimerization promotes the conversion of closed to open conformation of MAD2L1. Formation of a heterotetrameric core complex containing two molecules each of MAD1L1 and of MAD2L1 promotes binding of another molecule of MAD2L1 to each MAD2L1, resulting in a heterohexamer. Perturbation of the original MAD1L1-MAD2L1 structure by the spindle checkpoint may decrease MAD2L1 affinity for MAD1L1. CDC20 can compete with MAD1L1 for MAD2L1 binding, until the attachment and/or tension dampen the checkpoint signal, preventing further release of MAD2L1 on to CDC20. Also able to interact with the BUB1/BUB3 complex. Interacts with NEK2. Interacts with TTK. Interacts with TPR; the interactions occurs in a microtubule-independent manner. Interacts with IK. Interacts with the viral Tax protein. Interacts with PRAP1. Phosphorylated; by BUB1. Become hyperphosphorylated in late S through M phases or after mitotic spindle damage.

It is found in the nucleus. The protein localises to the chromosome. It localises to the centromere. The protein resides in the kinetochore. Its subcellular location is the nucleus envelope. It is found in the cytoplasm. The protein localises to the cytoskeleton. It localises to the microtubule organizing center. The protein resides in the centrosome. Its subcellular location is the spindle. It is found in the spindle pole. Component of the spindle-assembly checkpoint that prevents the onset of anaphase until all chromosomes are properly aligned at the metaphase plate. Forms a heterotetrameric complex with the closed conformation form of MAD2L1 (C-MAD2) at unattached kinetochores during prometaphase, recruits an open conformation of MAD2L1 (O-MAD2) and promotes the conversion of O-MAD2 to C-MAD2, which ensures mitotic checkpoint signaling. The protein is Mitotic spindle assembly checkpoint protein MAD1 (MAD1L1) of Cricetulus griseus (Chinese hamster).